The primary structure comprises 207 residues: Phenazine biosynthesis protein PhzD1 (207 aa).

Residue aspartate 38 is the Proton donor of the active site. Residues glutamine 78, arginine 87, lysine 122, and 151-155 (YAHVG) each bind substrate.

Belongs to the isochorismatase family. As to quaternary structure, homodimer.

The catalysed reaction is (2S)-2-amino-4-deoxychorismate + H2O = (5S,6S)-6-amino-5-hydroxycyclohexa-1,3-diene-1-carboxyate + pyruvate. It participates in antibiotic biosynthesis; phenazine biosynthesis. In terms of biological role, involved in the biosynthesis of the antibiotic phenazine, a nitrogen-containing heterocyclic molecule. PhzD1 (operon phzA1B1C1E1F1G1) has a role in the biosynthesis of the phenazine during planktonic growth. Catalyzes the hydrolysis of the vinyl ether functional group of 2-amino-2-deoxyisochorismate (ADIC), yielding pyruvate and trans-2,3-dihydro-3-hydroxyanthranilic acid (DHHA). Also able to act on isochorismate, chorismate and 4-amino-4-deoxychorismate (ADC) as substrates. This is Phenazine biosynthesis protein PhzD1 from Pseudomonas aeruginosa (strain ATCC 15692 / DSM 22644 / CIP 104116 / JCM 14847 / LMG 12228 / 1C / PRS 101 / PAO1).